A 547-amino-acid polypeptide reads, in one-letter code: Chaperonin GroEL (547 aa).

ATP contacts are provided by residues 29 to 32 (TLGP), 86 to 90 (DGTTT), G413, and D498.

Belongs to the chaperonin (HSP60) family. In terms of assembly, forms a cylinder of 14 subunits composed of two heptameric rings stacked back-to-back. Interacts with the co-chaperonin GroES.

It localises to the cytoplasm. The enzyme catalyses ATP + H2O + a folded polypeptide = ADP + phosphate + an unfolded polypeptide.. In terms of biological role, together with its co-chaperonin GroES, plays an essential role in assisting protein folding. The GroEL-GroES system forms a nano-cage that allows encapsulation of the non-native substrate proteins and provides a physical environment optimized to promote and accelerate protein folding. The polypeptide is Chaperonin GroEL (Herpetosiphon aurantiacus (strain ATCC 23779 / DSM 785 / 114-95)).